We begin with the raw amino-acid sequence, 89 residues long: MSITVEEKNRVMTEFATKKGDTGSPEVQVAILSSRIATLTEHFKTHKKDNHSRRGLLKLVAQRRKLLDYLKGKDEARYNVLIAKLGLRR.

The protein belongs to the universal ribosomal protein uS15 family. As to quaternary structure, part of the 30S ribosomal subunit. Forms a bridge to the 50S subunit in the 70S ribosome, contacting the 23S rRNA.

Its function is as follows. One of the primary rRNA binding proteins, it binds directly to 16S rRNA where it helps nucleate assembly of the platform of the 30S subunit by binding and bridging several RNA helices of the 16S rRNA. Functionally, forms an intersubunit bridge (bridge B4) with the 23S rRNA of the 50S subunit in the ribosome. The chain is Small ribosomal subunit protein uS15 from Paracoccus denitrificans (strain Pd 1222).